Reading from the N-terminus, the 176-residue chain is N,N-dimethyl phenylurea N-demethylase subunit beta (176 aa).

This sequence belongs to the bacterial ring-hydroxylating dioxygenase beta subunit family. PdmA (subunit alpha) and PdmB (subunit beta) form the oxygenase component of a bacterial Rieske non-heme iron oxygenase (RO) system.

It carries out the reaction a 1,1-dimethyl-3-phenylurea + 2 reduced [2Fe-2S]-[ferredoxin] + O2 + 2 H(+) = a 1-methyl-3-phenylurea + formaldehyde + 2 oxidized [2Fe-2S]-[ferredoxin] + H2O. It catalyses the reaction isoproturon + 2 reduced [2Fe-2S]-[ferredoxin] + O2 + 2 H(+) = 1-methyl-3-[4-(propan-2-yl)phenyl]urea + formaldehyde + 2 oxidized [2Fe-2S]-[ferredoxin] + H2O. The catalysed reaction is chlorotoluron + 2 reduced [2Fe-2S]-[ferredoxin] + O2 + 2 H(+) = 3-(3-chloro-4-methylphenyl)-1-methylurea + formaldehyde + 2 oxidized [2Fe-2S]-[ferredoxin] + H2O. The enzyme catalyses metoxuron + 2 reduced [2Fe-2S]-[ferredoxin] + O2 + 2 H(+) = 3-(3-chloro-4-methoxylphenyl)-1-methylurea + formaldehyde + 2 oxidized [2Fe-2S]-[ferredoxin] + H2O. It carries out the reaction monuron + 2 reduced [2Fe-2S]-[ferredoxin] + O2 + 2 H(+) = 3-(4-chlorophenyl)-1-methylurea + formaldehyde + 2 oxidized [2Fe-2S]-[ferredoxin] + H2O. It catalyses the reaction diuron + 2 reduced [2Fe-2S]-[ferredoxin] + O2 + 2 H(+) = 3-(3,4-dichlorophenyl)-1-methylurea + formaldehyde + 2 oxidized [2Fe-2S]-[ferredoxin] + H2O. The catalysed reaction is fluometuron + 2 reduced [2Fe-2S]-[ferredoxin] + O2 + 2 H(+) = 3-[3-(trifluoromethyl)phenyl]-1-methylurea + formaldehyde + 2 oxidized [2Fe-2S]-[ferredoxin] + H2O. The enzyme catalyses fenuron + 2 reduced [2Fe-2S]-[ferredoxin] + O2 + 2 H(+) = 1-methyl-3-phenylurea + formaldehyde + 2 oxidized [2Fe-2S]-[ferredoxin] + H2O. It participates in xenobiotic degradation. Its activity is regulated as follows. Activity is stimulated in vitro by coexpression of a [3Fe-4S]-type ferredoxin. In terms of biological role, part of the multicomponent N,N-dimethyl phenylurea N-demethylase responsible for the initial N-demethylation step during the bacterial metabolism of N,N-dimethyl-substituted phenylurea herbicides. Catalyzes the mono-N-demethylation of N,N-dimethyl-substituted phenylurea herbicides to their mono-N-demethylated derivatives. Is active on isoproturon (IPU), chlorotoluron, metoxuron, monoron, diuron, fluometuron and fenuron, but cannot transform the N-methoxy-N-methyl-substituted herbicides. In Sphingobium sp. (strain YBL2), this protein is N,N-dimethyl phenylurea N-demethylase subunit beta.